The sequence spans 285 residues: MSAQIIDGKIISQTVRQEVAARVKARTDAGLRAPGLAVVLVGQDPASQIYVGSKRKACEEVGFISKSFDLPSSASEQQLLDLIDELNQDPTMDGILVQLPLPAGMDCTRILERIDPEKDVDGFHPYNVGRLSQRIPKLRSCTPKGIITLLERYNIEVRGKHAVIVGASNIVGRPMTLELLLAGATTTTCHRFTQDLEGHIRQADILVVAVGKPNFIPGGWIKEGATVIDVGINRLENGKLCGDVEFDVACQRAKYITPVPGGVGPMTVASLIENTLLACEQYHSA.

Residues 166 to 168 (GAS) and I232 each bind NADP(+).

Belongs to the tetrahydrofolate dehydrogenase/cyclohydrolase family. Homodimer.

The enzyme catalyses (6R)-5,10-methylene-5,6,7,8-tetrahydrofolate + NADP(+) = (6R)-5,10-methenyltetrahydrofolate + NADPH. The catalysed reaction is (6R)-5,10-methenyltetrahydrofolate + H2O = (6R)-10-formyltetrahydrofolate + H(+). It participates in one-carbon metabolism; tetrahydrofolate interconversion. With respect to regulation, the NAD(+)-dependent dehydrogenase is activated by inorganic phosphate. Functionally, catalyzes the oxidation of 5,10-methylenetetrahydrofolate to 5,10-methenyltetrahydrofolate and then the hydrolysis of 5,10-methenyltetrahydrofolate to 10-formyltetrahydrofolate. This chain is Bifunctional protein FolD, found in Photobacterium phosphoreum.